We begin with the raw amino-acid sequence, 192 residues long: Putative acetyltransferase YjbC (192 aa).

The N-acetyltransferase domain occupies 1-139 (MNWYEKLSEY…MEILYWSPKT (139 aa)).

The protein resides in the cytoplasm. This is Putative acetyltransferase YjbC (yjbC) from Bacillus subtilis (strain 168).